The sequence spans 390 residues: Purine permease 21 (390 aa).

Residues 12 to 34 (QQGKEPIPTDQDERSSVSGSQTK) are disordered. A run of 10 helical transmembrane segments spans residues 44-64 (WLRVAIYTFFVISGQSVATIL), 78-98 (LATVVQLVGFPILLPYHLLSV), 118-138 (LVYIVLGLLVGAACYLYSIGL), 140-160 (YLPVSTLSLICASQLAFTAFF), 169-189 (LTPIILNSLFLLTISSTLLAF), 204-224 (YVKGFVCTVGASAGFGLLLSL), 241-261 (VINMIIYMSLVASCVSVVGLF), 287-307 (LVWTAVTWQVFSIGCTGLIFE), 312-332 (FSNAISALGLPVVPILAVIIF), and 336-356 (MNGLKVISMILAIWGFVSYVY). Residues 367-390 (KSNEIPTTESPDRPEAEGSSEQSK) form a disordered region.

It belongs to the purine permeases (TC 2.A.7.14) family. As to expression, expressed in mesophyll cells.

The protein localises to the membrane. The polypeptide is Purine permease 21 (Arabidopsis thaliana (Mouse-ear cress)).